A 437-amino-acid chain; its full sequence is Nickel-cobalt-cadmium resistance protein NccC (437 aa).

A signal peptide spans Met1 to Ala48.

Belongs to the outer membrane factor (OMF) (TC 1.B.17) family.

Functionally, component of the NCC cation-efflux system that confers resistance to nickel, cobalt and cadmium. In Alcaligenes xylosoxydans xylosoxydans (Achromobacter xylosoxidans), this protein is Nickel-cobalt-cadmium resistance protein NccC (nccC).